The chain runs to 450 residues: Methylenetetrahydrofolate--tRNA-(uracil-5-)-methyltransferase TrmFO (450 aa).

10-15 (GGGLAG) contacts FAD.

The protein belongs to the MnmG family. TrmFO subfamily. FAD serves as cofactor.

Its subcellular location is the cytoplasm. The catalysed reaction is uridine(54) in tRNA + (6R)-5,10-methylene-5,6,7,8-tetrahydrofolate + NADH + H(+) = 5-methyluridine(54) in tRNA + (6S)-5,6,7,8-tetrahydrofolate + NAD(+). It carries out the reaction uridine(54) in tRNA + (6R)-5,10-methylene-5,6,7,8-tetrahydrofolate + NADPH + H(+) = 5-methyluridine(54) in tRNA + (6S)-5,6,7,8-tetrahydrofolate + NADP(+). Functionally, catalyzes the folate-dependent formation of 5-methyl-uridine at position 54 (M-5-U54) in all tRNAs. The chain is Methylenetetrahydrofolate--tRNA-(uracil-5-)-methyltransferase TrmFO from Anaeromyxobacter dehalogenans (strain 2CP-C).